Here is a 211-residue protein sequence, read N- to C-terminus: Soluble inorganic pyrophosphatase PPA1 (211 aa).

K61 and R75 together coordinate substrate. The active-site Proton donor is Y83. Y87 serves as a coordination point for substrate. Residues D97, D102, and D134 each contribute to the Mg(2+) site. Residue Y171 participates in substrate binding.

Belongs to the PPase family. The cofactor is Mg(2+).

Its subcellular location is the cytoplasm. It carries out the reaction diphosphate + H2O = 2 phosphate + H(+). Its activity is regulated as follows. Strongly inhibited by Ca(2+). Functionally, catalyzes the irreversible hydrolysis of pyrophosphate (PPi) to phosphate. This is Soluble inorganic pyrophosphatase PPA1 from Solanum tuberosum (Potato).